Reading from the N-terminus, the 570-residue chain is Proline--tRNA ligase (570 aa).

Belongs to the class-II aminoacyl-tRNA synthetase family. ProS type 1 subfamily. As to quaternary structure, homodimer.

Its subcellular location is the cytoplasm. It carries out the reaction tRNA(Pro) + L-proline + ATP = L-prolyl-tRNA(Pro) + AMP + diphosphate. Functionally, catalyzes the attachment of proline to tRNA(Pro) in a two-step reaction: proline is first activated by ATP to form Pro-AMP and then transferred to the acceptor end of tRNA(Pro). As ProRS can inadvertently accommodate and process non-cognate amino acids such as alanine and cysteine, to avoid such errors it has two additional distinct editing activities against alanine. One activity is designated as 'pretransfer' editing and involves the tRNA(Pro)-independent hydrolysis of activated Ala-AMP. The other activity is designated 'posttransfer' editing and involves deacylation of mischarged Ala-tRNA(Pro). The misacylated Cys-tRNA(Pro) is not edited by ProRS. The sequence is that of Proline--tRNA ligase from Geobacter metallireducens (strain ATCC 53774 / DSM 7210 / GS-15).